A 500-amino-acid chain; its full sequence is MNDFPWLTIIVVFPISAGSLMLFLPHRGNKINKWYTICICILELLITTYAFCYNFKMDDPLIQMSEDYKWINFFDFDWRLGIDGLSIGTILLTGFITTLATLAAFPVTRDSRLFHFLMLAMYSGQIGSFSSRDLLLFFIMWELELIPVYLLLSMWGGKKRLYSATKFILYTAGSSIFLLIGVLGISLYGSNEPTLNLELLANQSYPVTLEILFYIGFVIALTVKSPIIPLHTWLPDTHGEAHYSTCMLLAGILLKMGAYGLVRINMELLPHAHSLFSPWLMAVGTIQIIYAASTSPGQRNLKKRIAYSSVSHMGFIIIGIGSITDPGLNGAILQIISHGFIGAALFFLAGTSYDRMRLVYLDEMGGMAISIPKIFTMFTILSMASLALPGMSGFVAELIVFFGIITSQKYFVISKILIIFVMAIGIILTPIYLLSMSRQMFYGYKLSNVKNLSFFDSGPRELFLSISILLPIIGIGIYPDFVLSLASDKVESILSNYFYG.

The next 14 helical transmembrane spans lie at 4–24, 35–55, 87–107, 113–130, 134–154, 167–187, 211–231, 242–262, 272–292, 305–325, 330–350, 386–406, 416–436, and 462–482; these read FPWL…MLFL, YTIC…CYNF, IGTI…AFPV, LFHF…GSFS, LLLF…LLSM, FILY…GISL, ILFY…IPLH, HYST…YGLV, AHSL…IYAA, IAYS…SITD, GAIL…FLAG, LALP…GIIT, ILII…LLSM, and LFLS…PDFV.

This sequence belongs to the complex I subunit 4 family.

It localises to the plastid. The protein resides in the chloroplast thylakoid membrane. The enzyme catalyses a plastoquinone + NADH + (n+1) H(+)(in) = a plastoquinol + NAD(+) + n H(+)(out). It carries out the reaction a plastoquinone + NADPH + (n+1) H(+)(in) = a plastoquinol + NADP(+) + n H(+)(out). This Draba nemorosa (Woodland whitlowgrass) protein is NAD(P)H-quinone oxidoreductase chain 4, chloroplastic.